The primary structure comprises 308 residues: Pantoate--beta-alanine ligase (308 aa).

Alanine 2 is a propeptide (removed; partial).

The protein belongs to the pantothenate synthetase family. Homodimer. Expressed at low levels in leaf and root.

The protein localises to the cytoplasm. The enzyme catalyses (R)-pantoate + beta-alanine + ATP = (R)-pantothenate + AMP + diphosphate + H(+). It participates in cofactor biosynthesis; (R)-pantothenate biosynthesis; (R)-pantothenate from (R)-pantoate and beta-alanine: step 1/1. The sequence is that of Pantoate--beta-alanine ligase (PANC) from Lotus japonicus (Lotus corniculatus var. japonicus).